Here is a 1684-residue protein sequence, read N- to C-terminus: A-kinase anchor protein 12 (1684 aa).

The segment at 1–124 is disordered; that stretch reads MGAGSSTEQR…DITKDEQEET (124 aa). Gly2 carries the N-myristoyl glycine lipid modification. Phosphoserine occurs at positions 11, 18, 22, and 27. The segment covering 30–48 has biased composition (low complexity); sequence GPAAEASGAAGDPADADPA. Acidic residues predominate over residues 75 to 86; the sequence is ESQDGQEEEVTV. Over residues 89–105 the composition is skewed to basic and acidic residues; it reads VGQRESEDVKEKDRAKE. Ser136 carries the phosphoserine modification. Disordered regions lie at residues 175 to 281 and 296 to 353; these read SDTV…ETTS and KKTS…SADY. Over residues 212 to 227 the composition is skewed to basic and acidic residues; sequence ASKESELKQSTEKQEG. A compositionally biased stretch (polar residues) spans 228-247; the sequence is TLKQAQSSTEIPLQAESGQG. Phosphoserine is present on residues Ser234 and Ser244. A compositionally biased stretch (basic and acidic residues) spans 251-266; it reads EAAKDGEENREKEPTK. Residues 253-543 form an involved in PKC-binding region; the sequence is AKDGEENREK…QHIQTESPES (291 aa). Residues Ser270 and Ser273 each carry the phosphoserine modification. Residues 270-281 show a composition bias toward polar residues; the sequence is SPTSPVSNETTS. Residues 302–320 are compositionally biased toward basic and acidic residues; the sequence is KPKEDDLETSEKRKEQEAE. Over residues 321 to 342 the composition is skewed to acidic residues; it reads KVDEEEGEKTEPAPAEEQEPAE. Thr330 carries the post-translational modification Phosphothreonine. Ser350 bears the Phosphoserine mark. At Tyr353 the chain carries Phosphotyrosine. Phosphoserine occurs at positions 371 and 467. Positions 421-479 are disordered; sequence GSGESLPPEKLAETQEVPQEAEPVEELMKTKEVCVSGGDHTQLTDLSPEEKMLPKHPEG. Residues 468-478 are compositionally biased toward basic and acidic residues; the sequence is PEEKMLPKHPE. A phosphoserine mark is found at Ser489, Ser505, and Ser507. Residues 492-825 are disordered; the sequence is RIKVQGSPLK…INEDDPDVPA (334 aa). Low complexity predominate over residues 497–511; the sequence is GSPLKKLFSSSGLKK. The segment covering 512–521 has biased composition (basic residues); that stretch reads LSGKKQKGKR. Ser540, Ser543, Ser584, Ser598, Ser613, and Ser615 each carry phosphoserine. The AKAP CaM-binding 1 motif lies at 593–613; the sequence is ITPWASFKKMVTPKKRVRRPS. Positions 611–625 are enriched in basic and acidic residues; it reads RPSESDKEEELDKVK. The span at 626–637 shows a compositional bias: low complexity; sequence SATLSSTESTAS. Residue Thr628 is modified to Phosphothreonine. Residues Ser630, Ser631, Ser634, and Ser637 each carry the phosphoserine modification. The span at 641–660 shows a compositional bias: basic and acidic residues; the sequence is DEVRAVGEEQRSEEPKRRVD. Phosphoserine occurs at positions 682, 683, and 684. Positions 696 to 710 are enriched in basic and acidic residues; sequence DGHRAEEASKDKEAD. Positions 714–723 are enriched in polar residues; sequence ASTQEQDQAH. The segment covering 724–741 has biased composition (low complexity); the sequence is GSSSPEPAGSPSEGEGVS. A phosphoserine mark is found at Ser733, Ser745, Ser767, and Ser786. The short motif at 740–760 is the AKAP CaM-binding 2 element; that stretch reads VSTWESFKRLVTPRKKSKSKL. The short motif at 781–801 is the AKAP CaM-binding 3 element; the sequence is EESWVSIKKFIPGRRKKRADG. Phosphothreonine is present on Thr871. The residue at position 873 (Ser873) is a Phosphoserine. A disordered region spans residues 970–1001; sequence TEASGAEETTDMVSAVSQLSDSPDTTEEATPV. The segment covering 980–992 has biased composition (polar residues); that stretch reads DMVSAVSQLSDSP. A Glycyl lysine isopeptide (Lys-Gly) (interchain with G-Cter in SUMO1) cross-link involves residue Lys1030. Disordered stretches follow at residues 1055-1106, 1121-1211, 1232-1365, and 1391-1492; these read VEED…VTED, LMEQ…DVLE, EGEA…DKAD, and TVAT…REKI. Ser1059 is subject to Phosphoserine. Residues 1130–1176 show a composition bias toward polar residues; the sequence is SSETLTDSETNGSTPLADSDTPNGTQQDETVDSQDSNAIAAVKQSQV. Basic and acidic residues-rich tracts occupy residues 1198–1210 and 1239–1254; these read QEEH…RDVL and DGEK…ELEV. At Ser1292 the chain carries Phosphoserine. The segment covering 1293–1331 has biased composition (basic and acidic residues); that stretch reads PEKREMGTDVEKEETETKTEQASEEHEQETAAPEHEGTH. A phosphoserine mark is found at Ser1351, Ser1355, and Ser1357. The span at 1467–1492 shows a compositional bias: basic and acidic residues; sequence QRSDEDNKPDAGPDAAGKESAAREKI. Residues 1501 to 1514 form an RII-binding region; sequence ELESKSNKIVQSVI. Phosphoserine is present on residues Ser1546 and Ser1645. Residues 1568–1684 form a disordered region; it reads TLSAVAQEGL…QEPKGDLTES (117 aa). A compositionally biased stretch (basic and acidic residues) spans 1653–1684; it reads LTEEGDALKEEMNKAQTEEDDLQEPKGDLTES.

As to quaternary structure, binds to dimeric RII-alpha regulatory subunit of PKC. In terms of tissue distribution, isoform 1 is predominantly found in the nervous system. Isoform 3 is testis specific.

The protein localises to the cytoplasm. It is found in the cytoskeleton. It localises to the membrane. Functionally, anchoring protein that mediates the subcellular compartmentation of protein kinase A (PKA) and protein kinase C (PKC). This Mus musculus (Mouse) protein is A-kinase anchor protein 12 (Akap12).